The following is a 408-amino-acid chain: MGIKQWLLSLVVVAISATATQARVDDPAGKAAQYHKEYALFRSANMPSPDKLASGVGFHSFRIPAVVRTNTGRILAFAEGRRHNNRDYGDINLVYKRTKSPTNNGENPTDWESLREVVGTGPHTWGNPTPVVDGNTIYLFLSMNDGAYSQNGGNTLPDGTKTKTIDSTWVGRRHLYLTTSTDDGDTWTKPVDMTKTLTPDGQAWDAVGPGNGIKLSTGELVIPAQGRNIIGHGPSGNRTWSMQVLKGAGSEGTICQTPDGKLMRNDRPGPMGHRSVARGTLAGFGPFATDNGLPDPACQGSILSYNSDEPARTIFMNSASTDRRTAMRVRISYDKDAAKFNFGRELKDAPLGNVGNEGGYSSMTKTSDYKIGALVESDWYEDKGGEKSHRCIIWRRFNLSWIINGPNN.

The signal sequence occupies residues 1–22 (MGIKQWLLSLVVVAISATATQA). The substrate site is built by arginine 62, arginine 81, aspartate 87, and glutamine 150. Residue asparagine 237 is glycosylated (N-linked (GlcNAc...) asparagine). Substrate is bound by residues arginine 267, arginine 324, 324–325 (RT), 333–334 (YD), lysine 339, tyrosine 360, aspartate 378, and 378–380 (DWY). The N-linked (GlcNAc...) asparagine glycan is linked to asparagine 398.

The protein belongs to the glycosyl hydrolase 33 family.

The protein resides in the secreted. The enzyme catalyses Hydrolysis of alpha-(2-&gt;3)-, alpha-(2-&gt;6)-, alpha-(2-&gt;8)- glycosidic linkages of terminal sialic acid residues in oligosaccharides, glycoproteins, glycolipids, colominic acid and synthetic substrates.. In terms of biological role, sialidase is able to release sialic acid from a wide variety of natural substrates. This Arthroderma benhamiae (strain ATCC MYA-4681 / CBS 112371) (Trichophyton mentagrophytes) protein is Exo-alpha-sialidase ARB_03431.